A 303-amino-acid polypeptide reads, in one-letter code: Mycothiol acetyltransferase (303 aa).

N-acetyltransferase domains lie at 3 to 152 and 155 to 303; these read VTVT…VSLP and VRIR…MYRS. Asp35 is a binding site for 1D-myo-inositol 2-(L-cysteinylamino)-2-deoxy-alpha-D-glucopyranoside. Residue 79–81 participates in acetyl-CoA binding; sequence LTV. 1D-myo-inositol 2-(L-cysteinylamino)-2-deoxy-alpha-D-glucopyranoside contacts are provided by Glu182, Lys224, and Glu237. Residues 241 to 243 and 248 to 254 each bind acetyl-CoA; these read VGV and QGSGLGR. Tyr275 contributes to the 1D-myo-inositol 2-(L-cysteinylamino)-2-deoxy-alpha-D-glucopyranoside binding site.

It belongs to the acetyltransferase family. MshD subfamily. In terms of assembly, monomer.

It catalyses the reaction 1D-myo-inositol 2-(L-cysteinylamino)-2-deoxy-alpha-D-glucopyranoside + acetyl-CoA = mycothiol + CoA + H(+). Catalyzes the transfer of acetyl from acetyl-CoA to desacetylmycothiol (Cys-GlcN-Ins) to form mycothiol. This is Mycothiol acetyltransferase from Kocuria rhizophila (strain ATCC 9341 / DSM 348 / NBRC 103217 / DC2201).